Reading from the N-terminus, the 600-residue chain is MAIKKAKRKSNVEEVKTQLLEIKTELKDGVFTFTGPMTINEFSKKIKKQAKDVILHFFKQGKMYNANQIINEEEIAELCLEFDYEFKKEEQITVSNFMDTLVLSDEAKDLEERAPIITVMGHVDHGKTTLIDVIRKSKIVDTEAGGITQHTGAYQIEYNGKKITFIDTPGHEAFTQMRSRGAKVTDIVILVVAADDGVMPQTKEAIDHAKSANVPIIVFVNKMDKPNKDIDRILSALSTLDVVSEEWSGDTQFIYGSALKNQGIDKLFDAINLQAEILELKANRNRDAIGTIIESHLDKGKGSVSVLIVQNGTLTPRDFIVAGSQYGRIRSIEDTNGNSLDAAYPGTPVIVTGLNYVPNAGDRFIALSDESFAKNIAEQKAFVDKQAELISRNTIVVQDGIKVLNIILKADVQGIAEAIKSKLLEIKNEEVKINVVRSSVGAITKSDILLAQASNAIIFGFNIRATGGIKTFAEESRVIVKTHTIIYELLDEVNELLNGLKAPKFKEVVTGEARIKKIFFYSKVGNIAGCEVISGKVTSGTKMRLIRNGITVHEGILDSLQREKNQAREVLKGFEFGTHIKKFNDIKEDDIIQTFEDVQI.

One can recognise a tr-type G domain in the interval 112 to 279 (ERAPIITVMG…AINLQAEILE (168 aa)). The segment at 121 to 128 (GHVDHGKT) is G1. 121-128 (GHVDHGKT) lines the GTP pocket. The segment at 146–150 (GITQH) is G2. The G3 stretch occupies residues 167–170 (DTPG). Residues 167 to 171 (DTPGH) and 221 to 224 (NKMD) contribute to the GTP site. The G4 stretch occupies residues 221-224 (NKMD). Residues 257-259 (SAL) form a G5 region.

Belongs to the TRAFAC class translation factor GTPase superfamily. Classic translation factor GTPase family. IF-2 subfamily.

Its subcellular location is the cytoplasm. One of the essential components for the initiation of protein synthesis. Protects formylmethionyl-tRNA from spontaneous hydrolysis and promotes its binding to the 30S ribosomal subunits. Also involved in the hydrolysis of GTP during the formation of the 70S ribosomal complex. The sequence is that of Translation initiation factor IF-2 from Mycoplasma mobile (strain ATCC 43663 / 163K / NCTC 11711) (Mesomycoplasma mobile).